Reading from the N-terminus, the 376-residue chain is Chaperone protein DnaJ (376 aa).

Residues 5–70 (DYYEVLGAAK…QKRAAYDQFG (66 aa)) enclose the J domain. The CR-type zinc-finger motif lies at 134–212 (GCDEKIRIPT…CGGQGRVQNT (79 aa)). The Zn(2+) site is built by C147, C150, C164, C167, C186, C189, C200, and C203. 4 CXXCXGXG motif repeats span residues 147-154 (CDVCHGSG), 164-171 (CTTCGGVG), 186-193 (CPTCKGEG), and 200-207 (CGNCGGQG).

The protein belongs to the DnaJ family. Homodimer. Zn(2+) serves as cofactor.

It is found in the cytoplasm. In terms of biological role, participates actively in the response to hyperosmotic and heat shock by preventing the aggregation of stress-denatured proteins and by disaggregating proteins, also in an autonomous, DnaK-independent fashion. Unfolded proteins bind initially to DnaJ; upon interaction with the DnaJ-bound protein, DnaK hydrolyzes its bound ATP, resulting in the formation of a stable complex. GrpE releases ADP from DnaK; ATP binding to DnaK triggers the release of the substrate protein, thus completing the reaction cycle. Several rounds of ATP-dependent interactions between DnaJ, DnaK and GrpE are required for fully efficient folding. Also involved, together with DnaK and GrpE, in the DNA replication of plasmids through activation of initiation proteins. The chain is Chaperone protein DnaJ from Alcanivorax borkumensis (strain ATCC 700651 / DSM 11573 / NCIMB 13689 / SK2).